The primary structure comprises 313 residues: Metal ABC transporter substrate-binding lipoprotein (313 aa).

The signal sequence occupies residues 1–23 (MIEKYKNILITFIALAAIVFLVG). Cysteine 24 is lipidated: N-palmitoyl cysteine. Cysteine 24 carries the S-diacylglycerol cysteine lipid modification. Positions 71, 143, 209, and 284 each coordinate Zn(2+).

It belongs to the bacterial solute-binding protein 9 family. Lipoprotein receptor antigen (Lrai) subfamily.

It localises to the cell membrane. In terms of biological role, part of an ATP-driven transport system for a metal; probably for manganese. This chain is Metal ABC transporter substrate-binding lipoprotein (mtsA), found in Lactococcus lactis subsp. lactis (strain IL1403) (Streptococcus lactis).